Here is a 701-residue protein sequence, read N- to C-terminus: MESKIYKMELAGRELSFEIGKYALLANGAVLARYGDTAVLVTACASEKPREGINFFPLTVDYEERLYSVGKIPGGFIKREGKPSEKAILSARLIDRPIRPLFPKDFYHDVSVIATVLSVDPDNPPDVLAMLGSSVALSISDIPFEGPTGSVLVGYVDDKIVINPTAKEREVSKLHLVVSGTKDRVMMIEAGAKEVSEDIMLEAIMRAQEEIKKIVEFIEGIVREVGKPKMEYQKRIVPEDIKQKVREIAYDKVYQYVQIPDKIERDKKLDELKEEVFKAFEGETEETLLLVDDALYSLEKEIVRKMIAEEGKRPDGRKFDEIRPLYAEIGILPRTHGSALFKRGYTQVLTVATLGTKGEMQFLDGLEEEEAKRYMHHYNFPPFSTGESKPVRGPGRREIGHGALAERALEPVIPSEDEFPYTIRLVSEVLTSNGSTSQASVCGSTLALMDAGVPIKAPVAGISIGLITKDDGSFILLTDIQGIEDFFGDMDFKVAGTREGITAIQLDIKIHGLTKEIIEKALYQAREARLKILDFMQTVIDKPRSELSPYAPKIFKTTVDPEKIRDIIGPGGKMINKIIAETNVKIDIEPDGRIFVAAPDDISGNRAISMIEGIGREIEVGQFFLGKVTRTASYGAFVEIYPGKEGLVHISQLDERRLKSVDEVVKVGDLVLVKVIGIDKLGRLSLSRKEALNVTYSRKAK.

Residues Asp-485 and Asp-491 each contribute to the Mg(2+) site. Residues 552–611 (PKIFKTTVDPEKIRDIIGPGGKMINKIIAETNVKIDIEPDGRIFVAAPDDISGNRAISMI) form the KH domain. One can recognise an S1 motif domain in the interval 621–689 (GQFFLGKVTR…KLGRLSLSRK (69 aa)).

It belongs to the polyribonucleotide nucleotidyltransferase family. Requires Mg(2+) as cofactor.

It is found in the cytoplasm. It catalyses the reaction RNA(n+1) + phosphate = RNA(n) + a ribonucleoside 5'-diphosphate. In terms of biological role, involved in mRNA degradation. Catalyzes the phosphorolysis of single-stranded polyribonucleotides processively in the 3'- to 5'-direction. The protein is Polyribonucleotide nucleotidyltransferase of Caldicellulosiruptor bescii (strain ATCC BAA-1888 / DSM 6725 / KCTC 15123 / Z-1320) (Anaerocellum thermophilum).